The following is a 257-amino-acid chain: Dof zinc finger protein DOF5.3 (257 aa).

The disordered stretch occupies residues 23-50; it reads LSYSSNPTPLDNDQKKPSPATAVTRPQP. A compositionally biased stretch (polar residues) spans 24-33; the sequence is SYSSNPTPLD. The Dof-type zinc finger occupies 55 to 109; that stretch reads LRCPRCDSTNTKFCYYNNYSLTQPRYFCKSCRRYWTKGGTLRNIPVGGGCRKNKR. The Zn(2+) site is built by Cys57, Cys60, Cys82, and Cys85. Residues 104-127 form a disordered region; that stretch reads CRKNKRSTSSAARSLRTTPEPASH. Positions 110 to 121 are enriched in low complexity; the sequence is STSSAARSLRTT.

In terms of tissue distribution, the PEAR proteins (e.g. DOF2.4, DOF5.1, DOF3.2, DOF1.1, DOF5.6 and DOF5.3) form a short-range concentration gradient that peaks at protophloem sieve elements (PSE). Accumulates in the stele.

It is found in the nucleus. Functionally, transcription factor that binds specifically to a 5'-AA[AG]G-3' consensus core sequence. The PEAR proteins (e.g. DOF2.4, DOF5.1, DOF3.2, DOF1.1, DOF5.6 and DOF5.3) activate gene expression that promotes radial growth of protophloem sieve elements. This chain is Dof zinc finger protein DOF5.3, found in Arabidopsis thaliana (Mouse-ear cress).